Here is a 483-residue protein sequence, read N- to C-terminus: Altronate oxidoreductase (483 aa).

An NAD(+)-binding site is contributed by 18-29 (IIQFGEGNFLRA).

Belongs to the mannitol dehydrogenase family. UxaB subfamily.

It carries out the reaction D-altronate + NAD(+) = keto-D-tagaturonate + NADH + H(+). The protein operates within carbohydrate metabolism; pentose and glucuronate interconversion. In Yersinia pestis, this protein is Altronate oxidoreductase.